Here is a 71-residue protein sequence, read N- to C-terminus: Small ribosomal subunit protein bS21 (71 aa).

Residues 49 to 59 are compositionally biased toward basic residues; it reads KAAAVKRAAKK. The tract at residues 49–71 is disordered; it reads KAAAVKRAAKKVSRENARRVRMY. Positions 60–71 are enriched in basic and acidic residues; sequence VSRENARRVRMY.

It belongs to the bacterial ribosomal protein bS21 family.

In Colwellia psychrerythraea (strain 34H / ATCC BAA-681) (Vibrio psychroerythus), this protein is Small ribosomal subunit protein bS21.